A 217-amino-acid polypeptide reads, in one-letter code: MIKVAPSILSADFAALGNEIKDVEKGGADCIHIDVMDGHFVPNITIGPLIVEAVRPVTDLPLDVHLMIEEPDRYIPAFAKAGADILSVHAEACPHLHRTIQLIKEQGVKAGVVLNPHTPVQVIEHVFDDLDLVLLMTVNPGFGGQKFIHSVLPKIKEVKRMADEKGKKDLLIEVDGGVNKETAPLVIEAGANLLVAGSAVYGQSDRKKAISEIRGSK.

A substrate-binding site is contributed by serine 7. The a divalent metal cation site is built by histidine 32, aspartate 34, and histidine 65. Catalysis depends on aspartate 34, which acts as the Proton acceptor. Substrate is bound by residues histidine 65, 141 to 144 (GFGG), 175 to 177 (DGG), and 197 to 198 (GS). Aspartate 175 contributes to the a divalent metal cation binding site. The active-site Proton donor is aspartate 175.

It belongs to the ribulose-phosphate 3-epimerase family. Requires a divalent metal cation as cofactor.

It carries out the reaction D-ribulose 5-phosphate = D-xylulose 5-phosphate. It functions in the pathway carbohydrate degradation. Functionally, catalyzes the reversible epimerization of D-ribulose 5-phosphate to D-xylulose 5-phosphate. This Bacillus subtilis (strain 168) protein is Ribulose-phosphate 3-epimerase.